A 408-amino-acid polypeptide reads, in one-letter code: Aminoacylase-1 (408 aa).

H80 is a binding site for Zn(2+). The active site involves D82. D113 is a Zn(2+) binding site. E147 functions as the Proton acceptor in the catalytic mechanism. Residues E148, E175, and H373 each contribute to the Zn(2+) site.

It belongs to the peptidase M20A family. As to quaternary structure, homodimer. Interacts with SPHK1. The cofactor is Zn(2+). Expression is highest in kidney, strong in brain and weaker in placenta and spleen.

The protein localises to the cytoplasm. It catalyses the reaction an N-acyl-L-amino acid + H2O = an L-alpha-amino acid + a carboxylate. It carries out the reaction N-acetyl-L-methionine + H2O = L-methionine + acetate. The catalysed reaction is N-acetyl-L-glutamine + H2O = L-glutamine + acetate. Functionally, catalyzes the hydrolysis of N-acetylated amino acids to acetate and free amino acids. This Homo sapiens (Human) protein is Aminoacylase-1 (ACY1).